A 174-amino-acid chain; its full sequence is Guided entry of tail-anchored proteins factor 1 (174 aa).

Residues 1–8 (MSSAAADH) lie on the Lumenal side of the membrane. Residues 9 to 29 (WAWLLVLSFVFGCNVLRVLLP) traverse the membrane as a helical segment. Residues 30–99 (SFSSFMSRVL…VKARTAQLAK (70 aa)) are Cytoplasmic-facing. Residues 39-94 (LQKDAEQESQMRAEIQDMKQELSTVNMMDEFARYARLERKINKMTDKLKTHVKART) are a coiled coil. Positions 39–97 (LQKDAEQESQMRAEIQDMKQELSTVNMMDEFARYARLERKINKMTDKLKTHVKARTAQL) are interaction with GET3/TRC40. Residues 100 to 120 (IKWVISVAFYVLQAALMISLI) traverse the membrane as a helical segment. The Lumenal portion of the chain corresponds to 121–148 (WKYYSVPVAVVPSKWITPLDRLVAFPTR). A helical transmembrane segment spans residues 149–169 (VAGGVGITCWILVCNKVVAIV). At 170–174 (LHPFS) the chain is on the cytoplasmic side.

The protein belongs to the WRB/GET1 family. As to quaternary structure, component of the Golgi to ER traffic (GET) complex, which is composed of GET1/WRB, CAMLG/GET2 and GET3. Within the complex, GET1 and CAMLG form a heterotetramer which is stabilized by phosphatidylinositol binding and which binds to the GET3 homodimer. Interacts with CAMLG (via C-terminus). GET3 shows a higher affinity for CAMLG than for GET1.

The protein resides in the endoplasmic reticulum membrane. Required for the post-translational delivery of tail-anchored (TA) proteins to the endoplasmic reticulum. Together with CAMLG/GET2, acts as a membrane receptor for soluble GET3/TRC40, which recognizes and selectively binds the transmembrane domain of TA proteins in the cytosol. Required to ensure correct topology and ER insertion of CAMLG. The protein is Guided entry of tail-anchored proteins factor 1 of Pongo abelii (Sumatran orangutan).